The following is a 96-amino-acid chain: uncharacterized protein (96 aa).

A disordered region spans residues 35-96 (SPSGEKRSTK…KKFSSPPHPK (62 aa)). Residues 38 to 52 (GEKRSTKNQTKENTK) show a composition bias toward basic and acidic residues. Residues 69–80 (ANQQTNENSKPL) are compositionally biased toward polar residues.

This is an uncharacterized protein from Dictyostelium discoideum (Social amoeba).